An 878-amino-acid polypeptide reads, in one-letter code: Indoleacetate decarboxylase (878 aa).

The region spanning 42–750 is the PFL domain; sequence DRTKRMKERF…VTGATPDGRL (709 aa). Cys500 (cysteine radical intermediate) is an active-site residue. The active-site Proton acceptor is the Glu502. The 121-residue stretch at 758 to 878 folds into the Glycine radical domain; sequence GILSASPGTD…VIARTEYDAL (121 aa). Gly853 bears the Glycine radical mark.

Belongs to the glycyl radical enzyme (GRE) family. As to quaternary structure, homodimer (predominantly) and monomer. In terms of processing, requires the activating protein OsIADAE to generate the key active site glycyl radical on Gly-853 that is involved in catalysis.

It carries out the reaction (indol-3-yl)acetate + H(+) = skatole + CO2. The protein operates within amino-acid degradation. Glycyl radical enzyme that catalyzes the terminal step of tryptophan fermentation, the decarboxylation of indoleacetate to form skatole, a malodorous compound that contributes to the characteristic smell of animal feces. No activity is detected with phenylacetate or p-hydroxyphenylacetate as substrates, indicating high substrate specificity. The polypeptide is Indoleacetate decarboxylase (Tractidigestivibacter scatoligenes (Olsenella scatoligenes)).